The sequence spans 786 residues: Mitochondrial intermediate peptidase (786 aa).

The transit peptide at 1–29 (MSSILLRSYRHHAKVWTRPSSKSSFIRSL) directs the protein to the mitochondrion. His567 contributes to the Zn(2+) binding site. Residue Glu568 is part of the active site. Residues His571 and His574 each contribute to the Zn(2+) site.

The protein belongs to the peptidase M3 family. Requires Zn(2+) as cofactor.

The protein resides in the mitochondrion matrix. It catalyses the reaction Release of an N-terminal octapeptide as second stage of processing of some proteins imported into the mitochondrion.. In terms of biological role, cleaves proteins, imported into the mitochondrion, to their mature size. While most mitochondrial precursor proteins are processed to the mature form in one step by mitochondrial processing peptidase (MPP), the sequential cleavage by MIP of an octapeptide after initial processing by MPP is a required step for a subgroup of nuclear-encoded precursor proteins destined for the matrix or the inner membrane. In Meyerozyma guilliermondii (strain ATCC 6260 / CBS 566 / DSM 6381 / JCM 1539 / NBRC 10279 / NRRL Y-324) (Yeast), this protein is Mitochondrial intermediate peptidase (OCT1).